Reading from the N-terminus, the 500-residue chain is NAD(P)H-quinone oxidoreductase subunit 2, chloroplastic (500 aa).

The next 13 helical transmembrane spans lie at 15-35, 42-62, 79-99, 109-129, 132-152, 167-187, 201-221, 247-267, 278-298, 306-326, 334-354, 377-397, and 400-420; these read ILPE…DLSL, WIIY…CLQW, FSIA…LLSI, LMEF…LCGA, LITI…LAGY, LLVG…LYGL, LIFA…CIIV, VVAF…IRII, WQFL…LVAI, MLAY…ISST, LVYM…VILF, ASCL…AGFF, and IYLF…VGLL.

The protein belongs to the complex I subunit 2 family. NDH is composed of at least 16 different subunits, 5 of which are encoded in the nucleus.

It localises to the plastid. It is found in the chloroplast thylakoid membrane. It carries out the reaction a plastoquinone + NADH + (n+1) H(+)(in) = a plastoquinol + NAD(+) + n H(+)(out). The enzyme catalyses a plastoquinone + NADPH + (n+1) H(+)(in) = a plastoquinol + NADP(+) + n H(+)(out). In terms of biological role, NDH shuttles electrons from NAD(P)H:plastoquinone, via FMN and iron-sulfur (Fe-S) centers, to quinones in the photosynthetic chain and possibly in a chloroplast respiratory chain. The immediate electron acceptor for the enzyme in this species is believed to be plastoquinone. Couples the redox reaction to proton translocation, and thus conserves the redox energy in a proton gradient. The chain is NAD(P)H-quinone oxidoreductase subunit 2, chloroplastic from Chaetosphaeridium globosum (Charophycean green alga).